The chain runs to 379 residues: Presenilin-associated rhomboid-like protein, mitochondrial (379 aa).

A mitochondrion-targeting transit peptide spans 1 to 52 (MAWRGWAQRGWGCGQAWAASVGGRSCEELTAALTPPRLLGRRFNFFIQQKCG). At 53–101 (FRKAPRKVEPRRSDTGTSGEAYKRSALIPPVEETVFYPSPYPIRSLIKP) the chain is on the mitochondrial matrix side. Position 65 is a phosphoserine (Ser65). Thr69 carries the phosphothreonine modification. Ser70 carries the phosphoserine modification. A helical membrane pass occupies residues 102 to 121 (LFFTVGFTGCAFGSAAIWQY). At 122-167 (ESLKSRVQSYFDGIKADWLDSIRPQKEGDFRKEINKWWNNLSDGQR) the chain is on the mitochondrial intermembrane side. The helical transmembrane segment at 168 to 187 (TVTGIIAANVLVFCLWRVPS) threads the bilayer. The Mitochondrial matrix portion of the chain corresponds to 188 to 207 (LQRTMIRYFTSNPASKVLCS). Residues 208 to 230 (PMLLSTFSHFSLFHMAANMYVLW) traverse the membrane as a helical segment. The Mitochondrial intermembrane portion of the chain corresponds to 231-244 (SFSSSIVNILGQEQ). A helical transmembrane segment spans residues 245 to 262 (FMAVYLSAGVISNFVSYV). At 263–273 (GKVATGRYGPS) the chain is on the mitochondrial matrix side. Residues 274 to 292 (LGASGAIMTVLAAVCTKIP) form a helical membrane-spanning segment. Ser277 (nucleophile) is an active-site residue. Over 293–295 (EGR) the chain is Mitochondrial intermembrane. Residues 296-318 (LAIIFLPMFTFTAGNALKAIIAM) form a helical membrane-spanning segment. At 319–332 (DTAGMILGWKFFDH) the chain is on the mitochondrial matrix side. A helical transmembrane segment spans residues 333–354 (AAHLGGALFGIWYVTYGHELIW). The active site involves His335. The Mitochondrial intermembrane segment spans residues 355–379 (KNREPLVKIWHEIRTNGPKKGGGSK).

Belongs to the peptidase S54 family. As to quaternary structure, interacts with PSEN1 and PSEN2. Binds OPA1. P-beta is proteolytically processed (beta-cleavage) in a PARL-dependent manner.

Its subcellular location is the mitochondrion inner membrane. It is found in the nucleus. The enzyme catalyses Cleaves type-1 transmembrane domains using a catalytic dyad composed of serine and histidine that are contributed by different transmembrane domains.. In terms of biological role, required for the control of apoptosis during postnatal growth. Essential for proteolytic processing of an antiapoptotic form of OPA1 which prevents the release of mitochondrial cytochrome c in response to intrinsic apoptotic signals. Required for the maturation of PINK1 into its 52kDa mature form after its cleavage by mitochondrial-processing peptidase (MPP). Promotes cleavage of serine/threonine-protein phosphatase PGAM5 in damaged mitochondria in response to loss of mitochondrial membrane potential. Mediates differential cleavage of PINK1 and PGAM5 depending on the health status of mitochondria, disassociating from PINK1 and associating with PGAM5 in response to mitochondrial membrane potential loss. Required for processing of CLPB into a form with higher protein disaggregase activity by removing an autoinhibitory N-terminal peptide. Promotes processing of DIABLO/SMAC in the mitochondrion which is required for DIABLO apoptotic activity. Also required for cleavage of STARD7 and TTC19. Promotes changes in mitochondria morphology regulated by phosphorylation of P-beta domain. The polypeptide is Presenilin-associated rhomboid-like protein, mitochondrial (PARL) (Pongo abelii (Sumatran orangutan)).